A 307-amino-acid polypeptide reads, in one-letter code: Aspartate carbamoyltransferase catalytic subunit (307 aa).

2 residues coordinate carbamoyl phosphate: arginine 54 and threonine 55. Lysine 83 contributes to the L-aspartate binding site. 3 residues coordinate carbamoyl phosphate: arginine 104, histidine 132, and glutamine 135. L-aspartate is bound by residues arginine 165 and arginine 228. The carbamoyl phosphate site is built by leucine 267 and proline 268.

Belongs to the aspartate/ornithine carbamoyltransferase superfamily. ATCase family. In terms of assembly, heterododecamer (2C3:3R2) of six catalytic PyrB chains organized as two trimers (C3), and six regulatory PyrI chains organized as three dimers (R2).

It carries out the reaction carbamoyl phosphate + L-aspartate = N-carbamoyl-L-aspartate + phosphate + H(+). Its pathway is pyrimidine metabolism; UMP biosynthesis via de novo pathway; (S)-dihydroorotate from bicarbonate: step 2/3. Catalyzes the condensation of carbamoyl phosphate and aspartate to form carbamoyl aspartate and inorganic phosphate, the committed step in the de novo pyrimidine nucleotide biosynthesis pathway. This is Aspartate carbamoyltransferase catalytic subunit from Clostridium botulinum (strain Loch Maree / Type A3).